The chain runs to 317 residues: Aspartate carbamoyltransferase catalytic subunit (317 aa).

Carbamoyl phosphate-binding residues include Arg-66 and Thr-67. Lys-94 lines the L-aspartate pocket. The carbamoyl phosphate site is built by Arg-116, His-144, and Gln-147. L-aspartate-binding residues include Arg-177 and Arg-231. Positions 272 and 273 each coordinate carbamoyl phosphate.

Belongs to the aspartate/ornithine carbamoyltransferase superfamily. ATCase family. Heterododecamer (2C3:3R2) of six catalytic PyrB chains organized as two trimers (C3), and six regulatory PyrI chains organized as three dimers (R2).

It catalyses the reaction carbamoyl phosphate + L-aspartate = N-carbamoyl-L-aspartate + phosphate + H(+). Its pathway is pyrimidine metabolism; UMP biosynthesis via de novo pathway; (S)-dihydroorotate from bicarbonate: step 2/3. Functionally, catalyzes the condensation of carbamoyl phosphate and aspartate to form carbamoyl aspartate and inorganic phosphate, the committed step in the de novo pyrimidine nucleotide biosynthesis pathway. The sequence is that of Aspartate carbamoyltransferase catalytic subunit from Rhodopseudomonas palustris (strain ATCC BAA-98 / CGA009).